The chain runs to 26 residues: Acyl carrier protein (26 aa).

In terms of domain architecture, Carrier spans 2 to 26 (SDTATRVQKIVVEHLGVESDKVTQE).

Belongs to the acyl carrier protein (ACP) family. 4'-phosphopantetheine is transferred from CoA to a specific serine of apo-ACP by AcpS. This modification is essential for activity because fatty acids are bound in thioester linkage to the sulfhydryl of the prosthetic group.

Its subcellular location is the cytoplasm. Its pathway is lipid metabolism; fatty acid biosynthesis. Its function is as follows. Carrier of the growing fatty acid chain in fatty acid biosynthesis. This is Acyl carrier protein (acpP) from Erythrobacter longus.